The sequence spans 485 residues: NADH-quinone oxidoreductase subunit N (485 aa).

14 helical membrane-spanning segments follow: residues 8–28, 35–55, 71–91, 105–125, 127–147, 159–179, 203–223, 235–255, 271–291, 297–317, 326–346, 373–393, 408–430, and 455–475; these read LIAL…MLSI, FLNA…LWFV, GFAM…CTFA, FYLL…ANHL, SLFL…GYAF, YTIL…LVYA, LLAG…LVPF, PAPV…GVVM, VVLA…ALSQ, LLGY…IALQ, VGVY…VVSL, AAVM…LGFI, WWLV…RVAV, and IVVL…QPLI.

This sequence belongs to the complex I subunit 2 family. As to quaternary structure, NDH-1 is composed of 13 different subunits. Subunits NuoA, H, J, K, L, M, N constitute the membrane sector of the complex.

Its subcellular location is the cell inner membrane. It carries out the reaction a quinone + NADH + 5 H(+)(in) = a quinol + NAD(+) + 4 H(+)(out). Its function is as follows. NDH-1 shuttles electrons from NADH, via FMN and iron-sulfur (Fe-S) centers, to quinones in the respiratory chain. The immediate electron acceptor for the enzyme in this species is believed to be ubiquinone. Couples the redox reaction to proton translocation (for every two electrons transferred, four hydrogen ions are translocated across the cytoplasmic membrane), and thus conserves the redox energy in a proton gradient. This is NADH-quinone oxidoreductase subunit N from Escherichia coli O139:H28 (strain E24377A / ETEC).